A 332-amino-acid polypeptide reads, in one-letter code: Ketol-acid reductoisomerase (NADP(+)) (332 aa).

The KARI N-terminal Rossmann domain maps to 5–185 (VKVYYDDEVS…GCTRAGVIET (181 aa)). Residues 28 to 31 (YGNQ), R51, S56, and 86 to 89 (DLVQ) each bind NADP(+). Residue H111 is part of the active site. G137 lines the NADP(+) pocket. A KARI C-terminal knotted domain is found at 186–331 (TFKDETESDL…RFIRKMSGLE (146 aa)). Positions 194, 198, 230, and 234 each coordinate Mg(2+). S255 provides a ligand contact to substrate.

The protein belongs to the ketol-acid reductoisomerase family. It depends on Mg(2+) as a cofactor.

The catalysed reaction is (2R)-2,3-dihydroxy-3-methylbutanoate + NADP(+) = (2S)-2-acetolactate + NADPH + H(+). The enzyme catalyses (2R,3R)-2,3-dihydroxy-3-methylpentanoate + NADP(+) = (S)-2-ethyl-2-hydroxy-3-oxobutanoate + NADPH + H(+). Its pathway is amino-acid biosynthesis; L-isoleucine biosynthesis; L-isoleucine from 2-oxobutanoate: step 2/4. It functions in the pathway amino-acid biosynthesis; L-valine biosynthesis; L-valine from pyruvate: step 2/4. Functionally, involved in the biosynthesis of branched-chain amino acids (BCAA). Catalyzes an alkyl-migration followed by a ketol-acid reduction of (S)-2-acetolactate (S2AL) to yield (R)-2,3-dihydroxy-isovalerate. In the isomerase reaction, S2AL is rearranged via a Mg-dependent methyl migration to produce 3-hydroxy-3-methyl-2-ketobutyrate (HMKB). In the reductase reaction, this 2-ketoacid undergoes a metal-dependent reduction by NADPH to yield (R)-2,3-dihydroxy-isovalerate. This Pyrococcus abyssi (strain GE5 / Orsay) protein is Ketol-acid reductoisomerase (NADP(+)).